The following is a 204-amino-acid chain: Imidazoleglycerol-phosphate dehydratase (204 aa).

Belongs to the imidazoleglycerol-phosphate dehydratase family.

The protein resides in the cytoplasm. It catalyses the reaction D-erythro-1-(imidazol-4-yl)glycerol 3-phosphate = 3-(imidazol-4-yl)-2-oxopropyl phosphate + H2O. It participates in amino-acid biosynthesis; L-histidine biosynthesis; L-histidine from 5-phospho-alpha-D-ribose 1-diphosphate: step 6/9. The protein is Imidazoleglycerol-phosphate dehydratase of Rhodococcus jostii (strain RHA1).